The chain runs to 548 residues: Calcium-transporting ATPase (548 aa).

The first 21 residues, 1-21 (MNFKSTVITAMCCFFSFAVLA), serve as a signal peptide directing secretion. Residues D37 and T78 each coordinate a divalent metal cation. The active-site Phosphothreonine intermediate is T78. Substrate is bound by residues N99 and 160-162 (KDR). An ATP-binding motif is present at residues 179–187 (DGKTGDWIT). 5 residues coordinate a divalent metal cation: D305, H309, D352, H353, and H488.

Requires Mg(2+) as cofactor.

It localises to the cell inner membrane. It catalyses the reaction Ca(2+)(in) + ATP + H2O = Ca(2+)(out) + ADP + phosphate + H(+). With respect to regulation, completely inhibited by vanadate(3-). Also inhibited by lanthanoid atom and phosphate. Not inhibited by N-ethylmaleimide, 1,3-dicyclohexylcarbodiimide, oligomycin, ouabain, valinomycin, nigericin, thapsigargin, cyclopiazonic acid or fluorescein isothiocyanate. In terms of biological role, catalyzes the hydrolysis of ATP coupled with the transport of calcium. Has some hydrolysis activity also with dATP, GTP, UTP, ITP and 4-nitrophenyl phosphate as substrate. No activity with ADP, CTP, acetyl dihydrogen phosphate or AMP-PNP as substrate. The chain is Calcium-transporting ATPase from Myroides odoratus (Flavobacterium odoratum).